Consider the following 115-residue polypeptide: Evasin P1182 (115 aa).

Positions 1-26 (MALNWSFRVIFVSTMWCALLKFATLG) are cleaved as a signal peptide. Cystine bridges form between C38-C58, C54-C94, C70-C99, and C89-C108. N-linked (GlcNAc...) asparagine glycans are attached at residues N45, N72, and N103.

It localises to the secreted. Its function is as follows. Salivary chemokine-binding protein which binds to host chemokines CCL2, CCL3, CCL4, CCL8 and CCL18. The polypeptide is Evasin P1182 (Amblyomma maculatum (Gulf Coast tick)).